The following is a 544-amino-acid chain: CTP synthase (544 aa).

The segment at 1–265 (MTRYIFITGG…DTQVLAYFGL (265 aa)) is amidoligase domain. A CTP-binding site is contributed by S13. S13 provides a ligand contact to UTP. 14–19 (SLGKGL) is an ATP binding site. Position 54 (Y54) interacts with L-glutamine. D71 lines the ATP pocket. Mg(2+) contacts are provided by D71 and E139. Residues 146-148 (DIE), 186-191 (KTKPTQ), and K222 each bind CTP. UTP is bound by residues 186 to 191 (KTKPTQ) and K222. V240 serves as a coordination point for ATP. One can recognise a Glutamine amidotransferase type-1 domain in the interval 291–543 (TIAVVGKYTS…IKAAIEQSRL (253 aa)). G353 provides a ligand contact to L-glutamine. The active-site Nucleophile; for glutamine hydrolysis is the C380. L-glutamine contacts are provided by residues 381–384 (FGMQ), E404, and R472. Residues H516 and E518 contribute to the active site.

The protein belongs to the CTP synthase family. Homotetramer.

It carries out the reaction UTP + L-glutamine + ATP + H2O = CTP + L-glutamate + ADP + phosphate + 2 H(+). The enzyme catalyses L-glutamine + H2O = L-glutamate + NH4(+). It catalyses the reaction UTP + NH4(+) + ATP = CTP + ADP + phosphate + 2 H(+). The protein operates within pyrimidine metabolism; CTP biosynthesis via de novo pathway; CTP from UDP: step 2/2. Allosterically activated by GTP, when glutamine is the substrate; GTP has no effect on the reaction when ammonia is the substrate. The allosteric effector GTP functions by stabilizing the protein conformation that binds the tetrahedral intermediate(s) formed during glutamine hydrolysis. Inhibited by the product CTP, via allosteric rather than competitive inhibition. Functionally, catalyzes the ATP-dependent amination of UTP to CTP with either L-glutamine or ammonia as the source of nitrogen. Regulates intracellular CTP levels through interactions with the four ribonucleotide triphosphates. The chain is CTP synthase from Azospirillum brasilense.